Here is a 250-residue protein sequence, read N- to C-terminus: Probable transcriptional regulatory protein SCO1521 (250 aa).

This sequence belongs to the TACO1 family.

It is found in the cytoplasm. This chain is Probable transcriptional regulatory protein SCO1521, found in Streptomyces coelicolor (strain ATCC BAA-471 / A3(2) / M145).